The chain runs to 458 residues: UDP-N-acetylmuramate--L-alanine ligase (458 aa).

115-121 contributes to the ATP binding site; sequence GSHGKTT.

The protein belongs to the MurCDEF family.

It is found in the cytoplasm. The enzyme catalyses UDP-N-acetyl-alpha-D-muramate + L-alanine + ATP = UDP-N-acetyl-alpha-D-muramoyl-L-alanine + ADP + phosphate + H(+). The protein operates within cell wall biogenesis; peptidoglycan biosynthesis. In terms of biological role, cell wall formation. The sequence is that of UDP-N-acetylmuramate--L-alanine ligase from Anaeromyxobacter sp. (strain Fw109-5).